Reading from the N-terminus, the 492-residue chain is Ammonium transporter MEP1 (492 aa).

The Extracellular segment spans residues 1-18 (MESRTTGPLTTETYDGPT). A helical membrane pass occupies residues 19-39 (VAFMILGAALVFFMVPGLGFL). The Cytoplasmic portion of the chain corresponds to 40–49 (YSGLARRKSA). The helical transmembrane segment at 50–70 (LALIWVVLMATLVGILQWYFW) threads the bilayer. Residues 71–109 (GYSLAFSKSAPNNKFIGNLDSFGFRNVYGKKFDEDAYPE) are Extracellular-facing. The chain crosses the membrane as a helical span at residues 110–130 (LAYATFQMMFSCVNLSIIAGA). Topologically, residues 131–140 (TAERGRLLPH) are cytoplasmic. A helical membrane pass occupies residues 141–161 (MVFLFILATIGYCPVTYWIWS). Over 162–174 (PGGWAYQWGVLDW) the chain is Extracellular. Residues 175–195 (AGGGNIEILSAVSGFVYSWFL) form a helical membrane-spanning segment. Residues 196-210 (GKRNEKLLINFRPHN) lie on the Cytoplasmic side of the membrane. Residues 211–231 (VSLVTLGTSILWFGWLLFNSA) form a helical membrane-spanning segment. The Extracellular segment spans residues 232-240 (SSLSPNLRS). Residues 241 to 261 (VYAFMNTCLSAITGGMTWCLL) form a helical membrane-spanning segment. At 262–268 (DYRSEKK) the chain is on the cytoplasmic side. The helical transmembrane segment at 269 to 289 (WSTVGLCSGIISGLVAATPSS) threads the bilayer. A topological domain (extracellular) is located at residue Gly-290. A helical transmembrane segment spans residues 291–311 (CITLYGSLIQGIVAGVVCNFA). Topologically, residues 312-331 (TKLKYYAKVDDAMDILAEHG) are cytoplasmic. Residues 332 to 352 (VAGVIGLIFNALFGADWVIGM) traverse the membrane as a helical segment. Residues 353 to 373 (DGTTEHEGGWVTHNYKQMYKQ) are Extracellular-facing. A helical membrane pass occupies residues 374–394 (IAYIAASIGYTAAVTAIICFV). At 395 to 492 (LGYIPGMRLR…PIHQEDPANR (98 aa)) the chain is on the cytoplasmic side. Phosphoserine is present on residues Ser-442 and Ser-445. The tract at residues 455–492 (HLAAERSSSGTNSSSDGNGEMIQSEKILPIHQEDPANR) is disordered. Residues 461 to 473 (SSSGTNSSSDGNG) are compositionally biased toward low complexity.

This sequence belongs to the ammonia transporter channel (TC 1.A.11.2) family.

The protein localises to the membrane. Transporter for ammonium (both charged and uncharged NH3 and NH4) to use as a nitrogen source. Can also transport methylamine. The affinity of MEP1 is about twenty times lower than that of MEP2. MEP3 has the lowest affinity. This is Ammonium transporter MEP1 (MEP1) from Saccharomyces cerevisiae (strain ATCC 204508 / S288c) (Baker's yeast).